A 919-amino-acid chain; its full sequence is Coiled-coil domain-containing protein 66 (919 aa).

Disordered stretches follow at residues 145-166, 456-505, 724-744, and 762-816; these read KEET…KDEN, ERDR…RERE, ERNN…LPSP, and LKSD…EPSH. Positions 150-161 are enriched in polar residues; it reads QDSLHLNNTSNQ. Positions 467–558 form a coiled coil; that stretch reads HQKAITAQVE…EQRIRELAQK (92 aa). A mediates localization to cilia, centrosomes and spindle microtubules and the interaction with PCM1, CEP290, CEP104 and CSPP1 region spans residues 570-919; the sequence is GGYGLDDVSG…NQEENFNSSF (350 aa).

Homodimer; disulfide-linked. Interacts with CEP290. Interacts with PCM1. Interacts with ARMC9, TOGARAM1, CSPP1 and CEP104. Interacts with CDK5RAP2, CEP152, CEP192, TBG1 and PRC1. As to expression, expressed in retina and blood. Expressed in retina, mainly in photoreceptors but also in outer plexiform and ganglion cell layers (at protein level).

It is found in the cytoplasm. The protein localises to the cytoskeleton. Its subcellular location is the microtubule organizing center. It localises to the centrosome. The protein resides in the centriolar satellite. It is found in the cell projection. The protein localises to the cilium. Its subcellular location is the cilium basal body. It localises to the cilium axoneme. The protein resides in the photoreceptor inner segment. It is found in the photoreceptor outer segment. Functionally, microtubule-binding protein required for ciliogenesis. May function in ciliogenesis by mediating the transport of proteins like BBS4 to the cilium, but also through the organization of the centriolar satellites. Required for the assembly of signaling-competent cilia with proper structure and length. Mediates this function in part by regulating transition zone assembly and basal body recruitment of the IFT-B complex. Cooperates with the ciliopathy proteins CSPP1 and CEP104 during cilium length regulation. Plays two important roles during cell division. First, is required for mitotic progression via regulation of spindle assembly, organization and orientation, levels of spindle microtubules (MTs), kinetochore-fiber integrity, and chromosome alignment. Second, functions during cytokinesis in part by regulating assembly and organization of central spindle and midbody MTs. Plays a role in retina morphogenesis and/or homeostasis. In Canis lupus familiaris (Dog), this protein is Coiled-coil domain-containing protein 66 (CCDC66).